The chain runs to 205 residues: ATP-dependent dethiobiotin synthetase BioD (205 aa).

T16 serves as a coordination point for Mg(2+). K32 is a catalytic residue. Residue T36 participates in substrate binding. E97 contributes to the Mg(2+) binding site. 97-100 (EGAG) is a binding site for ATP.

It belongs to the dethiobiotin synthetase family. Homodimer. Requires Mg(2+) as cofactor.

It is found in the cytoplasm. The catalysed reaction is (7R,8S)-7,8-diammoniononanoate + CO2 + ATP = (4R,5S)-dethiobiotin + ADP + phosphate + 3 H(+). Its pathway is cofactor biosynthesis; biotin biosynthesis; biotin from 7,8-diaminononanoate: step 1/2. In terms of biological role, catalyzes a mechanistically unusual reaction, the ATP-dependent insertion of CO2 between the N7 and N8 nitrogen atoms of 7,8-diaminopelargonic acid (DAPA, also called 7,8-diammoniononanoate) to form a ureido ring. The polypeptide is ATP-dependent dethiobiotin synthetase BioD (Paramagnetospirillum magneticum (strain ATCC 700264 / AMB-1) (Magnetospirillum magneticum)).